The chain runs to 1056 residues: Carbamoyl phosphate synthase large chain (1056 aa).

The tract at residues 1-399 (MKIDVSKVIV…AFQKAIRMLD (399 aa)) is carboxyphosphate synthetic domain. The ATP site is built by Arg127, Arg167, Gly173, Gly174, Lys206, Leu208, Glu213, Gly239, Val240, His241, Gln282, and Glu296. The 195-residue stretch at 131-325 (QKTMKKVGLP…LAYIATKLAI (195 aa)) folds into the ATP-grasp 1 domain. Mg(2+) is bound by residues Gln282, Glu296, and Asn298. Gln282, Glu296, and Asn298 together coordinate Mn(2+). The tract at residues 400-536 (IGDELIGKYY…VTYDGVENDI (137 aa)) is oligomerization domain. The segment at 537-919 (PKPKKPSILV…LKSWLSVKPN (383 aa)) is carbamoyl phosphate synthetic domain. Residues 661–849 (SKLLEKLGIP…LMELSAQAVL (189 aa)) form the ATP-grasp 2 domain. Arg697, Lys736, Ile738, Glu742, Gly766, Val767, His768, Ser769, Gln809, and Glu820 together coordinate ATP. 3 residues coordinate Mg(2+): Gln809, Glu820, and Asn822. Gln809, Glu820, and Asn822 together coordinate Mn(2+). One can recognise an MGS-like domain in the interval 915 to 1043 (SVKPNELPKT…REYWIRKIEE (129 aa)). The tract at residues 920 to 1056 (ELPKTSALIY…EYAASVVLRR (137 aa)) is allosteric domain.

This sequence belongs to the CarB family. In terms of assembly, composed of two chains; the small (or glutamine) chain promotes the hydrolysis of glutamine to ammonia, which is used by the large (or ammonia) chain to synthesize carbamoyl phosphate. Tetramer of heterodimers (alpha,beta)4. It depends on Mg(2+) as a cofactor. Requires Mn(2+) as cofactor.

It carries out the reaction hydrogencarbonate + L-glutamine + 2 ATP + H2O = carbamoyl phosphate + L-glutamate + 2 ADP + phosphate + 2 H(+). The enzyme catalyses hydrogencarbonate + NH4(+) + 2 ATP = carbamoyl phosphate + 2 ADP + phosphate + 2 H(+). It participates in amino-acid biosynthesis; L-arginine biosynthesis; carbamoyl phosphate from bicarbonate: step 1/1. Its pathway is pyrimidine metabolism; UMP biosynthesis via de novo pathway; (S)-dihydroorotate from bicarbonate: step 1/3. In terms of biological role, large subunit of the glutamine-dependent carbamoyl phosphate synthetase (CPSase). CPSase catalyzes the formation of carbamoyl phosphate from the ammonia moiety of glutamine, carbonate, and phosphate donated by ATP, constituting the first step of 2 biosynthetic pathways, one leading to arginine and/or urea and the other to pyrimidine nucleotides. The large subunit (synthetase) binds the substrates ammonia (free or transferred from glutamine from the small subunit), hydrogencarbonate and ATP and carries out an ATP-coupled ligase reaction, activating hydrogencarbonate by forming carboxy phosphate which reacts with ammonia to form carbamoyl phosphate. This chain is Carbamoyl phosphate synthase large chain, found in Pyrococcus furiosus (strain ATCC 43587 / DSM 3638 / JCM 8422 / Vc1).